Consider the following 45-residue polypeptide: Monellin chain A (45 aa).

Heterodimer of an A chain and a B chain.

Its function is as follows. Taste-modifying protein; intensely sweet-tasting protein. In Dioscoreophyllum cumminsii (Serendipity berry), this protein is Monellin chain A.